The primary structure comprises 1220 residues: Spike glycoprotein (1220 aa).

Positions 1 to 15 (MWLITILATISCVTA) are cleaved as a signal peptide. Topologically, residues 16 to 1181 (QLSQTNPDCP…PGTPSLALWK (1166 aa)) are virion surface. N-linked (GlcNAc...) asparagine; by host glycans are attached at residues N60, N80, N111, N262, N403, N601, N644, N711, N774, N789, N1004, N1028, N1091, N1121, and N1143. Residues 1118-1169 (ININVTFQQQLLQLQEQVDQLNLQTNYTTTEIQSIIDKYNVEIQNALNQIVD) are a coiled coil. A helical transmembrane segment spans residues 1182–1202 (VILILIAVVVVIVIIATTIFC). Over 1203–1220 (SVRKNQSELPLQVLSRLR) the chain is Intravirion.

Belongs to the torovirinae spike protein family. In terms of assembly, homotrimer.

It localises to the virion membrane. Its function is as follows. Mediates the binding of virions to the host cell receptor and is involved in membrane fusion. This chain is Spike glycoprotein (S), found in Blicca bjoerkna (white bream).